Here is a 327-residue protein sequence, read N- to C-terminus: Tetraacyldisaccharide 4'-kinase (327 aa).

56–63 (FVGGTGKT) is an ATP binding site.

Belongs to the LpxK family.

It catalyses the reaction a lipid A disaccharide + ATP = a lipid IVA + ADP + H(+). Its pathway is glycolipid biosynthesis; lipid IV(A) biosynthesis; lipid IV(A) from (3R)-3-hydroxytetradecanoyl-[acyl-carrier-protein] and UDP-N-acetyl-alpha-D-glucosamine: step 6/6. Its function is as follows. Transfers the gamma-phosphate of ATP to the 4'-position of a tetraacyldisaccharide 1-phosphate intermediate (termed DS-1-P) to form tetraacyldisaccharide 1,4'-bis-phosphate (lipid IVA). The sequence is that of Tetraacyldisaccharide 4'-kinase from Halorhodospira halophila (strain DSM 244 / SL1) (Ectothiorhodospira halophila (strain DSM 244 / SL1)).